The chain runs to 358 residues: Photosystem II protein D1 2 (358 aa).

Helical transmembrane passes span 28 to 45 (YVGW…AATT), 117 to 132 (HFLI…QWEL), and 141 to 155 (WICV…AAFA). H117 contacts chlorophyll a. A pheophytin a-binding site is contributed by Y125. 2 residues coordinate [CaMn4O5] cluster: D169 and E188. The helical transmembrane segment at 196–217 (FHMLGVAGVFGGSLFSAMHGSL) threads the bilayer. H197 serves as a coordination point for chlorophyll a. Residues H214 and 263-264 (SF) each bind a quinone. H214 contributes to the Fe cation binding site. Residue H271 participates in Fe cation binding. A helical membrane pass occupies residues 273 to 287 (FLAAWPVVGIWFTSM). 4 residues coordinate [CaMn4O5] cluster: H331, E332, D341, and A343. A propeptide spanning residues 344–358 (ATESTPVALQAPTIG) is cleaved from the precursor.

Belongs to the reaction center PufL/M/PsbA/D family. In terms of assembly, PSII is composed of 1 copy each of membrane proteins PsbA, PsbB, PsbC, PsbD, PsbE, PsbF, PsbH, PsbI, PsbJ, PsbK, PsbL, PsbM, PsbT, PsbX, PsbY, PsbZ, Psb30/Ycf12, peripheral proteins PsbO, CyanoQ (PsbQ), PsbU, PsbV and a large number of cofactors. It forms dimeric complexes. It depends on The D1/D2 heterodimer binds P680, chlorophylls that are the primary electron donor of PSII, and subsequent electron acceptors. It shares a non-heme iron and each subunit binds pheophytin, quinone, additional chlorophylls, carotenoids and lipids. D1 provides most of the ligands for the Mn4-Ca-O5 cluster of the oxygen-evolving complex (OEC). There is also a Cl(-1) ion associated with D1 and D2, which is required for oxygen evolution. The PSII complex binds additional chlorophylls, carotenoids and specific lipids. as a cofactor. Tyr-160 forms a radical intermediate that is referred to as redox-active TyrZ, YZ or Y-Z. Post-translationally, C-terminally processed by CtpA; processing is essential to allow assembly of the oxygen-evolving complex and thus photosynthetic growth.

The protein localises to the cellular thylakoid membrane. It catalyses the reaction 2 a plastoquinone + 4 hnu + 2 H2O = 2 a plastoquinol + O2. Its function is as follows. Photosystem II (PSII) is a light-driven water:plastoquinone oxidoreductase that uses light energy to abstract electrons from H(2)O, generating O(2) and a proton gradient subsequently used for ATP formation. It consists of a core antenna complex that captures photons, and an electron transfer chain that converts photonic excitation into a charge separation. The D1/D2 (PsbA/PsbD) reaction center heterodimer binds P680, the primary electron donor of PSII as well as several subsequent electron acceptors. In Synechococcus sp. (strain WH7803), this protein is Photosystem II protein D1 2.